The following is a 172-amino-acid chain: Ribosome maturation factor RimM (172 aa).

Residues Asp-96–Leu-168 enclose the PRC barrel domain.

This sequence belongs to the RimM family. As to quaternary structure, binds ribosomal protein uS19.

Its subcellular location is the cytoplasm. Functionally, an accessory protein needed during the final step in the assembly of 30S ribosomal subunit, possibly for assembly of the head region. Essential for efficient processing of 16S rRNA. May be needed both before and after RbfA during the maturation of 16S rRNA. It has affinity for free ribosomal 30S subunits but not for 70S ribosomes. This chain is Ribosome maturation factor RimM, found in Streptococcus agalactiae serotype III (strain NEM316).